Reading from the N-terminus, the 24-residue chain is Coenzyme PQQ synthesis protein A (24 aa).

The pyrroloquinoline quinone (Glu-Tyr) cross-link spans Glu-16–Tyr-20.

It belongs to the PqqA family.

Its pathway is cofactor biosynthesis; pyrroloquinoline quinone biosynthesis. In terms of biological role, required for coenzyme pyrroloquinoline quinone (PQQ) biosynthesis. PQQ is probably formed by cross-linking a specific glutamate to a specific tyrosine residue and excising these residues from the peptide. This chain is Coenzyme PQQ synthesis protein A, found in Pseudomonas fluorescens (strain Pf0-1).